The primary structure comprises 265 residues: Energy-coupling factor transporter transmembrane protein EcfT (265 aa).

A run of 6 helical transmembrane segments spans residues 29 to 49, 63 to 83, 94 to 114, 117 to 137, 143 to 163, and 243 to 263; these read VMAF…ALMF, FLFF…TLLL, LVDL…AMMF, FVLI…IELT, ILAP…MLSI, and RFAD…LFWL.

This sequence belongs to the energy-coupling factor EcfT family. As to quaternary structure, forms a stable energy-coupling factor (ECF) transporter complex composed of 2 membrane-embedded substrate-binding proteins (S component), 2 ATP-binding proteins (A component) and 2 transmembrane proteins (T component). May be able to interact with more than 1 S component at a time.

The protein localises to the cell membrane. Functionally, transmembrane (T) component of an energy-coupling factor (ECF) ABC-transporter complex. Unlike classic ABC transporters this ECF transporter provides the energy necessary to transport a number of different substrates. This is Energy-coupling factor transporter transmembrane protein EcfT from Listeria innocua serovar 6a (strain ATCC BAA-680 / CLIP 11262).